We begin with the raw amino-acid sequence, 258 residues long: Tryptophan synthase alpha chain (258 aa).

Active-site proton acceptor residues include Glu-47 and Asp-58.

Belongs to the TrpA family. As to quaternary structure, tetramer of two alpha and two beta chains.

It carries out the reaction (1S,2R)-1-C-(indol-3-yl)glycerol 3-phosphate + L-serine = D-glyceraldehyde 3-phosphate + L-tryptophan + H2O. It participates in amino-acid biosynthesis; L-tryptophan biosynthesis; L-tryptophan from chorismate: step 5/5. In terms of biological role, the alpha subunit is responsible for the aldol cleavage of indoleglycerol phosphate to indole and glyceraldehyde 3-phosphate. The sequence is that of Tryptophan synthase alpha chain from Bacillus anthracis (strain CDC 684 / NRRL 3495).